A 492-amino-acid chain; its full sequence is Pre-mRNA-splicing factor sap61 (492 aa).

Residues 243–267 (FYCEVCQKFFGKITVFEAHKKSKAH) form a C2H2-type zinc finger. 2 disordered regions span residues 268–291 (NKAV…KQKG) and 337–365 (AAER…QDDE). Low complexity predominate over residues 276 to 286 (SSSPSTTSNTN). The segment covering 345 to 354 (QSTPSVSVEG) has biased composition (polar residues). The span at 355-365 (NQDEESDQDDE) shows a compositional bias: acidic residues. A Phosphoserine modification is found at Ser360. The Matrin-type zinc finger occupies 397-428 (FPCEICGNYVYMGRKAFDKHFTEQRHIYGLKC).

It belongs to the SF3A3 family. Belongs to the 40S cdc5-associated complex (or cwf complex), a spliceosome sub-complex reminiscent of a late-stage spliceosome composed of the U2, U5 and U6 snRNAs and at least brr2, cdc5, cwf2/prp3, cwf3/syf1, cwf4/syf3, cwf5/ecm2, spp42/cwf6, cwf7/spf27, cwf8, cwf9, cwf10, cwf11, cwf12, prp45/cwf13, cwf14, cwf15, cwf16, cwf17, cwf18, cwf19, cwf20, cwf21, cwf22, cwf23, cwf24, cwf25, cwf26, cyp7/cwf27, cwf28, cwf29/ist3, lea1, msl1, prp5/cwf1, prp10, prp12/sap130, prp17, prp22, sap61, sap62, sap114, sap145, slu7, smb1, smd1, smd3, smf1, smg1 and syf2.

Its subcellular location is the nucleus. The protein localises to the cytoplasm. Functionally, involved in mRNA splicing where it associates with cdc5 and the other cwf proteins as part of the spliceosome. This is Pre-mRNA-splicing factor sap61 (sap61) from Schizosaccharomyces pombe (strain 972 / ATCC 24843) (Fission yeast).